We begin with the raw amino-acid sequence, 920 residues long: WD repeat-containing protein 47 (920 aa).

A LisH domain is found at 10–42 (KEVEIIKLILDFLNSKKLHISMLALEKESGVIN). In terms of domain architecture, CTLH spans 45–102 (FSDDMLFLRQLILDGQWDEVLQFIQPLECMEKFDKKRFRYIILKQKFLEALCVNNAMS). Residue T285 is modified to Phosphothreonine. 4 positions are modified to phosphoserine: S289, S292, S297, and S312. Over residues 371–380 (YEESPERSDT) the composition is skewed to basic and acidic residues. The disordered stretch occupies residues 371-422 (YEESPERSDTPVEAQQPVSSEAMCQGSGLEKEPANGAQNPVPAKQEKNELRD). At S423 the chain carries Phosphoserine. The segment at 501-594 (LNQQCSGSKN…RSKGEEDDKS (94 aa)) is disordered. Residues 506–523 (SGSKNNGSNNSSVTSFST) are compositionally biased toward low complexity. Positions 538 to 552 (NIHTSTPRNPGSTNH) are enriched in polar residues. Residue T543 is modified to Phosphothreonine. WD repeat units follow at residues 605 to 644 (EDTQ…DASA), 660 to 699 (HHKG…CNAT), 707 to 749 (MHDG…GQGL), 754 to 792 (GHTG…CVRV), 799 to 838 (GTGS…MVQS), 841 to 880 (PHSS…TKQL), and 887 to 919 (EHKD…WTYS).

In terms of assembly, interacts with MAP1S (via WD repeats). In terms of tissue distribution, enriched in the nervous system (at protein level).

It localises to the cytoplasm. The protein localises to the cytoskeleton. In Mus musculus (Mouse), this protein is WD repeat-containing protein 47 (Wdr47).